The primary structure comprises 447 residues: N-succinylarginine dihydrolase (447 aa).

Substrate is bound by residues Ala19–Ser28, Asn110, and His137–Arg138. Residue Glu174 is part of the active site. Residue Arg212 participates in substrate binding. His248 is a catalytic residue. Asp250 and Asn359 together coordinate substrate. The active-site Nucleophile is the Cys365.

This sequence belongs to the succinylarginine dihydrolase family. Homodimer.

The catalysed reaction is N(2)-succinyl-L-arginine + 2 H2O + 2 H(+) = N(2)-succinyl-L-ornithine + 2 NH4(+) + CO2. Its pathway is amino-acid degradation; L-arginine degradation via AST pathway; L-glutamate and succinate from L-arginine: step 2/5. Catalyzes the hydrolysis of N(2)-succinylarginine into N(2)-succinylornithine, ammonia and CO(2). The polypeptide is N-succinylarginine dihydrolase (Salmonella typhi).